The following is a 237-amino-acid chain: Putative ATP-binding protein BMEII0108 (237 aa).

The ABC transporter domain occupies 5 to 205 (ISFNNVVMRY…DLPYPRTEAI (201 aa)). An ATP-binding site is contributed by 37-44 (GPSGCGKS).

This sequence belongs to the ABC transporter superfamily. In terms of assembly, the complex is composed of two ATP-binding proteins (BMEII0108), two transmembrane proteins (BMEII0107) and a solute-binding protein (BMEII0109).

The protein localises to the cell inner membrane. Its function is as follows. Probably part of an ABC transporter complex. Probably Responsible for energy coupling to the transport system. The chain is Putative ATP-binding protein BMEII0108 from Brucella melitensis biotype 1 (strain ATCC 23456 / CCUG 17765 / NCTC 10094 / 16M).